The sequence spans 535 residues: Bifunctional purine biosynthesis protein PurH (535 aa).

The 146-residue stretch at 6-151 (TRLPIRRALI…KNHKDVAIVV (146 aa)) folds into the MGS-like domain.

The protein belongs to the PurH family.

It catalyses the reaction (6R)-10-formyltetrahydrofolate + 5-amino-1-(5-phospho-beta-D-ribosyl)imidazole-4-carboxamide = 5-formamido-1-(5-phospho-D-ribosyl)imidazole-4-carboxamide + (6S)-5,6,7,8-tetrahydrofolate. The enzyme catalyses IMP + H2O = 5-formamido-1-(5-phospho-D-ribosyl)imidazole-4-carboxamide. The protein operates within purine metabolism; IMP biosynthesis via de novo pathway; 5-formamido-1-(5-phospho-D-ribosyl)imidazole-4-carboxamide from 5-amino-1-(5-phospho-D-ribosyl)imidazole-4-carboxamide (10-formyl THF route): step 1/1. It participates in purine metabolism; IMP biosynthesis via de novo pathway; IMP from 5-formamido-1-(5-phospho-D-ribosyl)imidazole-4-carboxamide: step 1/1. The protein is Bifunctional purine biosynthesis protein PurH of Pseudomonas aeruginosa (strain LESB58).